The following is a 492-amino-acid chain: Probable sphingolipid transporter spinster homolog 1 (492 aa).

A helical membrane pass occupies residues 29–49; it reads FVTILCIINLINYVDRGVIAS. N-linked (GlcNAc...) asparagine glycosylation is found at Asn-53 and Asn-76. Transmembrane regions (helical) follow at residues 83-103, 119-139, 141-161, 169-189, 200-220, 279-299, and 317-337; these read GLLSSAFMVGLLVASPIFAGL, VWTIAVIGCGFSYNFWMIAVF, MFVGVGEASFISLAAPYIDDS, FWLGLFYMCIPAGVALGYVFG, WAFYIEAIAMAVFVILSFCIK, VFIVNVLGYITYNFVIGAYSY, and IFGGLTIICGIIGTLGGSYVL. The N-linked (GlcNAc...) asparagine glycan is linked to Asn-341. 4 helical membrane-spanning segments follow: residues 348–368, 372–392, 407–427, and 442–462; these read FKLLAASTLLGAAFCFTAFLM, YAFIALFAVGEILIFAPQAPV, LSMASSTVLIHILGDVPSSPL, and TLIITSILFLAAIIWGIGIFM. Phosphoserine is present on Ser-472. The span at 472–481 shows a compositional bias: acidic residues; it reads SEDDEVEEDK. The segment at 472 to 492 is disordered; the sequence is SEDDEVEEDKLESKTENSTLA. N-linked (GlcNAc...) asparagine glycosylation occurs at Asn-488.

The protein belongs to the major facilitator superfamily. Spinster (TC 2.A.1.49) family.

It localises to the late endosome membrane. The protein localises to the lysosome membrane. Its function is as follows. Probable sphingolipid transporter that plays a central role in endosomes and/or lysosomes storage. This chain is Probable sphingolipid transporter spinster homolog 1, found in Arabidopsis thaliana (Mouse-ear cress).